A 253-amino-acid polypeptide reads, in one-letter code: 3-deoxy-manno-octulosonate cytidylyltransferase (253 aa).

Belongs to the KdsB family.

The protein resides in the cytoplasm. The catalysed reaction is 3-deoxy-alpha-D-manno-oct-2-ulosonate + CTP = CMP-3-deoxy-beta-D-manno-octulosonate + diphosphate. The protein operates within nucleotide-sugar biosynthesis; CMP-3-deoxy-D-manno-octulosonate biosynthesis; CMP-3-deoxy-D-manno-octulosonate from 3-deoxy-D-manno-octulosonate and CTP: step 1/1. It participates in bacterial outer membrane biogenesis; lipopolysaccharide biosynthesis. Functionally, activates KDO (a required 8-carbon sugar) for incorporation into bacterial lipopolysaccharide in Gram-negative bacteria. This Neisseria meningitidis serogroup B (strain ATCC BAA-335 / MC58) protein is 3-deoxy-manno-octulosonate cytidylyltransferase.